Here is a 104-residue protein sequence, read N- to C-terminus: L-rhamnose mutarotase (104 aa).

Tyrosine 18 lines the substrate pocket. Histidine 22 serves as the catalytic Proton donor. Substrate-binding positions include tyrosine 41 and 76–77 (WW).

The protein belongs to the rhamnose mutarotase family. As to quaternary structure, homodimer.

The protein resides in the cytoplasm. It catalyses the reaction alpha-L-rhamnose = beta-L-rhamnose. Its pathway is carbohydrate metabolism; L-rhamnose metabolism. Functionally, involved in the anomeric conversion of L-rhamnose. The sequence is that of L-rhamnose mutarotase from Escherichia fergusonii (strain ATCC 35469 / DSM 13698 / CCUG 18766 / IAM 14443 / JCM 21226 / LMG 7866 / NBRC 102419 / NCTC 12128 / CDC 0568-73).